A 598-amino-acid polypeptide reads, in one-letter code: UvrABC system protein C (598 aa).

Residues 14–91 (DSPGCYLHKD…IQKNMPKYNI (78 aa)) form the GIY-YIG domain. Residues 196–231 (DKIIEDLRSKMLAASEEMAFERAAEYRDLISGIATM) enclose the UVR domain.

The protein belongs to the UvrC family. Interacts with UvrB in an incision complex.

It is found in the cytoplasm. Its function is as follows. The UvrABC repair system catalyzes the recognition and processing of DNA lesions. UvrC both incises the 5' and 3' sides of the lesion. The N-terminal half is responsible for the 3' incision and the C-terminal half is responsible for the 5' incision. This is UvrABC system protein C from Streptococcus pyogenes serotype M3 (strain ATCC BAA-595 / MGAS315).